Consider the following 165-residue polypeptide: Large ribosomal subunit protein uL10 (165 aa).

Belongs to the universal ribosomal protein uL10 family. As to quaternary structure, part of the ribosomal stalk of the 50S ribosomal subunit. The N-terminus interacts with L11 and the large rRNA to form the base of the stalk. The C-terminus forms an elongated spine to which L12 dimers bind in a sequential fashion forming a multimeric L10(L12)X complex.

Functionally, forms part of the ribosomal stalk, playing a central role in the interaction of the ribosome with GTP-bound translation factors. This Yersinia pseudotuberculosis serotype IB (strain PB1/+) protein is Large ribosomal subunit protein uL10.